A 98-amino-acid chain; its full sequence is Integration host factor subunit beta (98 aa).

It belongs to the bacterial histone-like protein family. Heterodimer of an alpha and a beta chain.

Functionally, this protein is one of the two subunits of integration host factor, a specific DNA-binding protein that functions in genetic recombination as well as in transcriptional and translational control. This chain is Integration host factor subunit beta, found in Pseudomonas fluorescens (strain SBW25).